The primary structure comprises 83 residues: Small ribosomal subunit protein bS16 (83 aa).

The protein belongs to the bacterial ribosomal protein bS16 family.

This is Small ribosomal subunit protein bS16 from Cupriavidus taiwanensis (strain DSM 17343 / BCRC 17206 / CCUG 44338 / CIP 107171 / LMG 19424 / R1) (Ralstonia taiwanensis (strain LMG 19424)).